A 351-amino-acid chain; its full sequence is Leukotriene B4 receptor 1 (351 aa).

Residues 1–21 lie on the Extracellular side of the membrane; sequence MAANTTSPAAPSSPGGMSLSL. Asn-4 is a glycosylation site (N-linked (GlcNAc...) asparagine). Residues 22 to 44 form a helical membrane-spanning segment; that stretch reads LPIVLLSVALAVGLPGNSFVVWS. Residues 45–56 are Cytoplasmic-facing; it reads ILKRMQKRTVTA. The chain crosses the membrane as a helical span at residues 57 to 77; that stretch reads LLVLNLALADLAVLLTAPFFL. The Extracellular portion of the chain corresponds to 78–93; the sequence is HFLARGTWSFREMGCR. A helical membrane pass occupies residues 94-115; it reads LCHYVCGISMYASVLLITIMSL. Residues 116–140 are Cytoplasmic-facing; it reads DRSLAVARPFMSQKVRTKAFARWVL. Residues 141-161 form a helical membrane-spanning segment; that stretch reads AGIWVVSFLLAIPVLVYRTVK. Over 162–179 the chain is Extracellular; sequence WNNRTLICAPNYPNKEHK. N-linked (GlcNAc...) asparagine glycosylation is present at Asn-164. A helical membrane pass occupies residues 180–200; the sequence is VFHLLFEAITGFLLPFLAVVA. Over 201–222 the chain is Cytoplasmic; it reads SYSDIGRRLQARRFRRSRRTGR. A helical membrane pass occupies residues 223 to 243; the sequence is LVVLIILAFAAFWLPYHLVNL. Topologically, residues 244 to 268 are extracellular; the sequence is VEAGRTVAGWDKNSPAGQRLRLARY. Residues 269–289 traverse the membrane as a helical segment; that stretch reads VLIALAFLSSSVNPVLYACAG. The Cytoplasmic segment spans residues 290–351; sequence GGLLRSAGVG…TSSTIPESSK (62 aa). Composition is skewed to polar residues over residues 311–326 and 339–351; these read EVSSTRRGGTLVQTPK and SFMTSSTIPESSK. The interval 311–351 is disordered; sequence EVSSTRRGGTLVQTPKDTPACPEPGPTDSFMTSSTIPESSK.

The protein belongs to the G-protein coupled receptor 1 family. Post-translationally, phosphorylated by GRK6 upon leukotriene B4 binding; which promotes desensitization. In terms of tissue distribution, highly expressed on activated leukocytes, including eosinophils.

The protein resides in the cell membrane. In terms of biological role, receptor for leukotriene B4, a potent chemoattractant involved in inflammation and immune response. This Mus musculus (Mouse) protein is Leukotriene B4 receptor 1 (Ltb4r).